Reading from the N-terminus, the 102-residue chain is MICOS complex subunit MIC12 (102 aa).

A helical membrane pass occupies residues Val-4–Phe-26.

This sequence belongs to the MICOS complex subunit Mic12 family. As to quaternary structure, component of the mitochondrial contact site and cristae organizing system (MICOS) complex.

The protein localises to the mitochondrion inner membrane. Functionally, component of the MICOS complex, a large protein complex of the mitochondrial inner membrane that plays crucial roles in the maintenance of crista junctions, inner membrane architecture, and formation of contact sites to the outer membrane. This Lachancea thermotolerans (strain ATCC 56472 / CBS 6340 / NRRL Y-8284) (Yeast) protein is MICOS complex subunit MIC12 (AIM5).